The chain runs to 466 residues: Adenosylhomocysteinase (466 aa).

Positions 57, 132, and 192 each coordinate substrate. 193 to 195 (TTT) is an NAD(+) binding site. Residues lysine 222 and aspartate 226 each coordinate substrate. Residues asparagine 227, 256–261 (GYGDVG), glutamate 279, asparagine 314, 335–337 (IGH), and asparagine 380 contribute to the NAD(+) site.

Belongs to the adenosylhomocysteinase family. NAD(+) serves as cofactor.

It is found in the cytoplasm. It carries out the reaction S-adenosyl-L-homocysteine + H2O = L-homocysteine + adenosine. The protein operates within amino-acid biosynthesis; L-homocysteine biosynthesis; L-homocysteine from S-adenosyl-L-homocysteine: step 1/1. In terms of biological role, may play a key role in the regulation of the intracellular concentration of adenosylhomocysteine. The protein is Adenosylhomocysteinase of Brucella anthropi (strain ATCC 49188 / DSM 6882 / CCUG 24695 / JCM 21032 / LMG 3331 / NBRC 15819 / NCTC 12168 / Alc 37) (Ochrobactrum anthropi).